Reading from the N-terminus, the 275-residue chain is Formamidopyrimidine-DNA glycosylase (275 aa).

The active-site Schiff-base intermediate with DNA is the proline 2. Glutamate 3 (proton donor) is an active-site residue. Catalysis depends on lysine 58, which acts as the Proton donor; for beta-elimination activity. DNA-binding residues include histidine 93, arginine 111, and arginine 156. An FPG-type zinc finger spans residues 241–275; the sequence is FVYDRAGLPCRVCGTPIRQIVQGQRSTYFCPTCQR. Arginine 265 serves as the catalytic Proton donor; for delta-elimination activity.

This sequence belongs to the FPG family. Monomer. Zn(2+) serves as cofactor.

The enzyme catalyses Hydrolysis of DNA containing ring-opened 7-methylguanine residues, releasing 2,6-diamino-4-hydroxy-5-(N-methyl)formamidopyrimidine.. It catalyses the reaction 2'-deoxyribonucleotide-(2'-deoxyribose 5'-phosphate)-2'-deoxyribonucleotide-DNA = a 3'-end 2'-deoxyribonucleotide-(2,3-dehydro-2,3-deoxyribose 5'-phosphate)-DNA + a 5'-end 5'-phospho-2'-deoxyribonucleoside-DNA + H(+). In terms of biological role, involved in base excision repair of DNA damaged by oxidation or by mutagenic agents. Acts as a DNA glycosylase that recognizes and removes damaged bases. Has a preference for oxidized purines, such as 7,8-dihydro-8-oxoguanine (8-oxoG). Has AP (apurinic/apyrimidinic) lyase activity and introduces nicks in the DNA strand. Cleaves the DNA backbone by beta-delta elimination to generate a single-strand break at the site of the removed base with both 3'- and 5'-phosphates. This Burkholderia ambifaria (strain MC40-6) protein is Formamidopyrimidine-DNA glycosylase.